The chain runs to 868 residues: MKDSWNSTSIIPFTFSSLIFFLFTFDFQDVFGVPTKHLCRLEQRDALLELKKEFKIKKPCFDGLHPTTESWANNSDCCYWDGITCNDKSGEVLELDLSRSCLQSRFHSNSSLFTVLNLRFLTTLDLSYNYFSGQIPSCIENFSHLTTLDLSKNYFSGGIPSSIGNLSQLTFLDLSGNEFVGEMPFFGNMNQLTNLYVDSNDLTGIFPLSLLNLKHLSDLSLSRNQFTGTLPSNMSSLSNLEYFEAWGNAFTGTLPSSLFTIASLTSINLRNNQLNGTLEFGNISSPSTLTVLDISNNNFIGPIPKSISKFINLQDLDLSHLNTQGPVDFSIFTNLKSLQLLNLSHLNTTTTIDLNALFSSHLNSIYSMDLSGNHVSATTKISVADHHPTQLISQLYLSGCGITEFPELLRSQHKMTNLDISNNKIKGQVPGWLWTLPKLIFVDLSNNIFTGFERSTEHGLSLITKPSMQYLVGSNNNFTGKIPSFICALRSLITLDLSDNNLNGSIPPCMGNLKSTLSFLNLRQNRLGGGLPRSIFKSLRSLDVGHNQLVGKLPRSFIRLSALEVLNVENNRINDTFPFWLSSLKKLQVLVLRSNAFHGPIHHASFHTLRIINLSHNQFSGTLPANYFVNWNAMSSLMATEDRSQEKYMGDSFRYYHDSVVLMNKGLEMELVRILKIYTALDFSENKLEGEIPRSIGLLKELHVLNLSSNAFTGHIPSSMGNLRELESLDVSQNKLSGEIPQELGNLSYLAYMNFSHNQLGGLVPGGTQFRRQNCSSFKDNPGLYGSSLEEVCLDIHAPAPQQHEPPELEEEDREVFSWIAAAIGFGPGIAFGLTIRYILVFYKPDWFMHTFGHLQPSAHEKRLRRKQ.

Residues 1 to 32 form the signal peptide; it reads MKDSWNSTSIIPFTFSSLIFFLFTFDFQDVFG. Residues 33–815 lie on the Extracellular side of the membrane; the sequence is VPTKHLCRLE…PPELEEEDRE (783 aa). N-linked (GlcNAc...) asparagine glycans are attached at residues N73, N109, N141, and N165. 25 LRR repeats span residues 118-142, 143-166, 168-188, 189-213, 214-237, 239-261, 262-285, 287-310, 312-334, 335-360, 362-385, 389-412, 413-436, 438-459, 465-489, 490-515, 517-538, 540-560, 561-586, 588-606, 607-630, 675-699, 700-723, 724-747, and 749-772; these read LRFL…IENF, SHLT…IGNL, QLTF…FFGN, MNQL…LLNL, KHLS…MSSL, NLEY…LFTI, ASLT…NISS, STLT…ISKF, NLQD…IFTN, LKSL…LFSS, LNSI…SVAD, TQLI…LRSQ, HKMT…LWTL, KLIF…TEHG, KPSM…ICAL, RSLI…NLKS, LSFL…IFKS, RSLD…FIRL, SALE…SLKK, QVLV…HASF, HTLR…YFVN, LKIY…IGLL, KELH…MGNL, RELE…LGNL, and YLAY…QFRR. N233 carries N-linked (GlcNAc...) asparagine glycosylation. N-linked (GlcNAc...) asparagine glycans are attached at residues N275 and N282. 2 N-linked (GlcNAc...) asparagine glycosylation sites follow: N342 and N347. Residues N477 and N503 are each glycosylated (N-linked (GlcNAc...) asparagine). N-linked (GlcNAc...) asparagine glycosylation is present at N574. N613 carries N-linked (GlcNAc...) asparagine glycosylation. Residues N706, N746, N754, and N774 are each glycosylated (N-linked (GlcNAc...) asparagine). The chain crosses the membrane as a helical span at residues 816-836; the sequence is VFSWIAAAIGFGPGIAFGLTI. Topologically, residues 837 to 868 are cytoplasmic; the sequence is RYILVFYKPDWFMHTFGHLQPSAHEKRLRRKQ.

It belongs to the RLP family.

It is found in the cell membrane. The sequence is that of Receptor-like protein 32 from Arabidopsis thaliana (Mouse-ear cress).